The following is a 414-amino-acid chain: Ornithine aminotransferase (414 aa).

Cysteine 154 and cysteine 163 are joined by a disulfide. Lysine 262 is modified (N6-(pyridoxal phosphate)lysine).

Belongs to the class-III pyridoxal-phosphate-dependent aminotransferase family. In terms of assembly, homodimer. The cofactor is pyridoxal 5'-phosphate. Post-translationally, the disulfide bond between Cys-154 and Cys-163 is reduced by TRX1 which increases OAT catalytic activity.

Its subcellular location is the cytoplasm. The enzyme catalyses a 2-oxocarboxylate + L-ornithine = L-glutamate 5-semialdehyde + an L-alpha-amino acid. It catalyses the reaction L-ornithine + 2-oxoglutarate = L-glutamate 5-semialdehyde + L-glutamate. Its pathway is amino-acid biosynthesis; L-proline biosynthesis; L-glutamate 5-semialdehyde from L-ornithine: step 1/1. Its activity is regulated as follows. Unlike for mammalian OATs, activity is increased by TRX1-mediated reduction of the disulfide bond between Cys-154 and Cys-163. Binding to TRX1 may also induce conformational changes that facilitate substrate binding. Catalyzes the transamination of alpha-ketoglutarate with ornithine or N-acetylornithine and of glutamate-5-semialdehyde with glutamate and alanine. The chain is Ornithine aminotransferase from Plasmodium yoelii yoelii.